A 95-amino-acid chain; its full sequence is Large ribosomal subunit protein uL23c (95 aa).

Belongs to the universal ribosomal protein uL23 family. Part of the 50S ribosomal subunit.

Its subcellular location is the plastid. It localises to the chloroplast. Binds to 23S rRNA. The protein is Large ribosomal subunit protein uL23c (rpl23) of Chlamydomonas reinhardtii (Chlamydomonas smithii).